Here is a 451-residue protein sequence, read N- to C-terminus: Mannan endo-1,6-alpha-mannosidase DFG5 (451 aa).

An N-terminal signal peptide occupies residues Met1–Ser21. Asn86, Asn111, Asn135, Asn203, Asn243, Asn268, and Asn402 each carry an N-linked (GlcNAc...) asparagine glycan. A lipid anchor (GPI-anchor amidated alanine) is attached at Ala429. Positions Gly430–Phe451 are cleaved as a propeptide — removed in mature form.

The protein belongs to the glycosyl hydrolase 76 family. In terms of processing, the GPI-anchor is attached to the protein in the endoplasmic reticulum and serves to target the protein to the cell surface. There, the glucosamine-inositol phospholipid moiety is cleaved off and the GPI-modified mannoprotein is covalently attached via its lipidless GPI glycan remnant to the 1,6-beta-glucan of the outer cell wall layer. Post-translationally, N-mannosylated.

Its subcellular location is the secreted. The protein resides in the cell wall. It localises to the cell membrane. It catalyses the reaction Random hydrolysis of (1-&gt;6)-alpha-D-mannosidic linkages in unbranched (1-&gt;6)-mannans.. Required for normal synthesis of the cell wall and alkaline pH-induced hypha formation. The polypeptide is Mannan endo-1,6-alpha-mannosidase DFG5 (DFG5) (Candida albicans (strain SC5314 / ATCC MYA-2876) (Yeast)).